Reading from the N-terminus, the 184-residue chain is Probable RNA 2'-phosphotransferase (184 aa).

Belongs to the KptA/TPT1 family.

In terms of biological role, removes the 2'-phosphate from RNA via an intermediate in which the phosphate is ADP-ribosylated by NAD followed by a presumed transesterification to release the RNA and generate ADP-ribose 1''-2''-cyclic phosphate (APPR&gt;P). May function as an ADP-ribosylase. This chain is Probable RNA 2'-phosphotransferase, found in Escherichia coli (strain K12 / MC4100 / BW2952).